We begin with the raw amino-acid sequence, 380 residues long: 1-deoxy-D-xylulose 5-phosphate reductoisomerase (380 aa).

Serine 10, glycine 11, serine 12, isoleucine 13, glycine 36, lysine 37, asparagine 38, and asparagine 120 together coordinate NADPH. Residue lysine 121 coordinates 1-deoxy-D-xylulose 5-phosphate. Glutamate 122 contacts NADPH. Aspartate 146 is a Mn(2+) binding site. The 1-deoxy-D-xylulose 5-phosphate site is built by serine 147, glutamate 148, serine 172, and histidine 195. Glutamate 148 contacts Mn(2+). Glycine 201 contacts NADPH. 4 residues coordinate 1-deoxy-D-xylulose 5-phosphate: serine 208, asparagine 213, lysine 214, and glutamate 217. Residue glutamate 217 coordinates Mn(2+).

The protein belongs to the DXR family. Mg(2+) is required as a cofactor. Mn(2+) serves as cofactor.

The enzyme catalyses 2-C-methyl-D-erythritol 4-phosphate + NADP(+) = 1-deoxy-D-xylulose 5-phosphate + NADPH + H(+). Its pathway is isoprenoid biosynthesis; isopentenyl diphosphate biosynthesis via DXP pathway; isopentenyl diphosphate from 1-deoxy-D-xylulose 5-phosphate: step 1/6. Functionally, catalyzes the NADPH-dependent rearrangement and reduction of 1-deoxy-D-xylulose-5-phosphate (DXP) to 2-C-methyl-D-erythritol 4-phosphate (MEP). The polypeptide is 1-deoxy-D-xylulose 5-phosphate reductoisomerase (Bacillus cereus (strain ATCC 10987 / NRS 248)).